The sequence spans 1614 residues: Chitin synthase csmA (1614 aa).

The disordered stretch occupies residues Met-1–Pro-22. The Myosin motor domain occupies Met-1–Glu-788. Positions Arg-9–Pro-19 are enriched in polar residues. Gly-105–Thr-112 contributes to the ATP binding site. The interval Gln-600–Ser-650 is disordered. A compositionally biased stretch (acidic residues) spans Pro-626–Asp-635. Residues Leu-668 to Asp-692 are actin-binding. 2 helical membrane-spanning segments follow: residues Trp-898–Gly-918 and Leu-937–Ile-957. The 60-residue stretch at Gln-961 to Phe-1020 folds into the Cytochrome b5 heme-binding domain. Asn-1047 and Asn-1072 each carry an N-linked (GlcNAc...) asparagine glycan. A helical transmembrane segment spans residues Phe-1209–Leu-1229. The N-linked (GlcNAc...) asparagine glycan is linked to Asn-1572.

In the N-terminal section; belongs to the TRAFAC class myosin-kinesin ATPase superfamily. Myosin family. The protein in the C-terminal section; belongs to the chitin synthase family. Class V subfamily.

It localises to the cell membrane. Its subcellular location is the cell septum. The protein resides in the cell tip. It catalyses the reaction [(1-&gt;4)-N-acetyl-beta-D-glucosaminyl](n) + UDP-N-acetyl-alpha-D-glucosamine = [(1-&gt;4)-N-acetyl-beta-D-glucosaminyl](n+1) + UDP + H(+). In terms of biological role, polymerizes chitin, a structural polymer of the cell wall and septum, by transferring the sugar moiety of UDP-GlcNAc to the non-reducing end of the growing chitin polymer. Acts as the major chitin synthase in Aspergillus niger involved in cell wall integrity which is principally responsible for chitin synthesis at the lateral cell wall. Plays an important role in septal growth or maintenance. Mediates colony spore formation. In Aspergillus niger (strain ATCC MYA-4892 / CBS 513.88 / FGSC A1513), this protein is Chitin synthase csmA.